A 143-amino-acid chain; its full sequence is UPF0201 protein Pars_1985 (143 aa).

This sequence belongs to the UPF0201 family.

The chain is UPF0201 protein Pars_1985 from Pyrobaculum arsenaticum (strain DSM 13514 / JCM 11321 / PZ6).